A 520-amino-acid polypeptide reads, in one-letter code: MEILIIVIAAVVGLALGFAIAKMLEKKQASGTIASAKKEAGSILKEAKAEGESIKKDKILQAKEKFIELKSEHEKVILSRDKKINDAEKRIKDKESHVSNELGKNKKLNKDLEEKVADYDHRLDFLEKKQEDIDKLHNSKVQQLEVISGLSAEDAKAQLIESLKDTAKADAMSIIQDTVEEAKLTAQQEARKIIINTIQRIGTEEAIENCVSVFNLESDDVKGRIIGREGRNIRALEAATGVEIIVDDTPEAIILSCFDSVRREVARLSLHKLVTDGRIHPARIEEVVKKTRKQIEEEIIDIGKRTVIDLGIHGLQPELIKMVGRMKYRSSYGQNLLQHSREVAKLCGVMAAELGLNPKLAKRAGLLHDIGKVPETETEVPHAILGMQWAEKHGEKPEVCNAIGAHHDEIEMNSLLSPIVQVCDAISGARPGARRQVLDSYIQRLKDLEEIAFGFGGVKKAYAIQAGRELRVIVESEKVSDEKASNLSFEISQKIQTDMTYPGQVKITVIRETRAVNVAK.

A helical membrane pass occupies residues 1 to 21; sequence MEILIIVIAAVVGLALGFAIA. In terms of domain architecture, KH spans 210–295; it reads CVSVFNLESD…EVVKKTRKQI (86 aa). One can recognise an HD domain in the interval 336–429; it reads LLQHSREVAK…VQVCDAISGA (94 aa).

The protein belongs to the RNase Y family.

Its subcellular location is the cell membrane. Its function is as follows. Endoribonuclease that initiates mRNA decay. In Christiangramia forsetii (strain DSM 17595 / CGMCC 1.15422 / KT0803) (Gramella forsetii), this protein is Ribonuclease Y.